A 144-amino-acid chain; its full sequence is Maximins 4/H3 type 2 (144 aa).

The signal sequence occupies residues 1–18 (MNFKYIIAVSFFIASAYA). Residues 19 to 43 (RRNEKDVQSLSQRDVLEEESLREIR) constitute a propeptide that is removed on maturation. Asparagine amide is present on asparagine 70. The propeptide occupies 74–123 (TAEDHEVMKRLEAVMRDLDSLDHPEEASERETRGFNQEEIANLFTKKEKR). Residue isoleucine 143 is modified to Isoleucine amide.

The protein belongs to the bombinin family. As to expression, expressed by the skin glands.

Its subcellular location is the secreted. In terms of biological role, maximin-4 shows antibacterial activity against both Gram-positive and Gram-negative bacteria. It also shows antimicrobial activity against the fungus C.albicans, but not against A.flavus nor P.uticale. It has little hemolytic activity. It does not possess a significant cytotoxicity against tumor cell lines. It does not possess a significant anti-HIV activity. Maximin-H3 shows antibacterial activity against both Gram-positive and Gram-negative bacteria. It also shows antimicrobial activity against the fungus C.albicans. Shows strong hemolytic activity. This Bombina maxima (Giant fire-bellied toad) protein is Maximins 4/H3 type 2.